A 194-amino-acid chain; its full sequence is ASAAPIKPPVQLFGLDGTYATALFSASAKDSSIEKTFQSVQKLSSTISKDAKVAQVLSNPALSLNSRKEVVSVLSKELKLEPVVSNLLTVLAENNRLSLFDSIAKQFSVLNDAYNGVVEATVVSAKPLDSKILNRLTKSITNSKYVGPGKTLKIKNEVDPEILGGLIVEVADKSVDLSLASKVNKLNKVLSETI.

F-type ATP synthases have 2 components, the catalytic core F(1) and the membrane-embedded component F(0), linked together by a central stalk and a peripheral stalk. The central stalk, also called rotor shaft, is often seen as part of F(1). The peripheral stalk is seen as part of F(0). F(0) contains the membrane channel next to the rotor. F-type ATP synthases form dimers but each monomer functions independently in ATP generation. The dimer consists of 18 different polypeptides: ATP1 (subunit alpha, part of F(1), 3 molecules per monomer), ATP2 (subunit beta, part of F(1), 3 molecules per monomer), ATP3 (subunit gamma, part of the central stalk), ATP4 (subunit b, part of the peripheral stalk), ATP5/OSCP (subunit 5/OSCP, part of the peripheral stalk), ATP6 (subunit a, part of the peripheral stalk), ATP7 (subunit d, part of the peripheral stalk), ATP8 (subunit 8, part of the peripheral stalk), OLI1 (subunit c, part of the rotor, 10 molecules per monomer), ATP14 (subunit h, part of the peripheral stalk), ATP15 (subunit epsilon, part of the central stalk), ATP16 (subunit delta, part of the central stalk), ATP17 (subunit f, part of the peripheral stalk), ATP18 (subunit i/j, part of the peripheral stalk). Dimer-specific subunits are ATP19 (subunit k, at interface between monomers), ATP20 (subunit g, at interface between monomers), TIM11 (subunit e, at interface between monomers). Also contains subunit L.

The protein localises to the mitochondrion inner membrane. In terms of biological role, mitochondrial membrane ATP synthase (F(1)F(0) ATP synthase or Complex V) produces ATP from ADP in the presence of a proton gradient across the membrane which is generated by electron transport complexes of the respiratory chain. F-type ATP synthases consist of two structural domains, F(1) - containing the extramembraneous catalytic core, and F(0) - containing the membrane proton channel, linked together by a central stalk and a peripheral stalk. During catalysis, ATP synthesis in the catalytic domain of F(1) is coupled via a rotary mechanism of the central stalk subunits to proton translocation. Part of the complex F(0) domain and the peripheral stalk, which acts as a stator to hold the catalytic alpha/ATP1(3)beta/ATP2(3) subcomplex and subunit a/ATP6 static relative to the rotary elements. In Pichia angusta (Yeast), this protein is ATP synthase subunit 5, mitochondrial.